A 261-amino-acid polypeptide reads, in one-letter code: Glucosamine-6-phosphate deaminase (261 aa).

Aspartate 67 (proton acceptor; for enolization step) is an active-site residue. Residue aspartate 136 is the For ring-opening step of the active site. Histidine 138 serves as the catalytic Proton acceptor; for ring-opening step. Glutamate 143 functions as the For ring-opening step in the catalytic mechanism.

This sequence belongs to the glucosamine/galactosamine-6-phosphate isomerase family. NagB subfamily.

It carries out the reaction alpha-D-glucosamine 6-phosphate + H2O = beta-D-fructose 6-phosphate + NH4(+). It functions in the pathway amino-sugar metabolism; N-acetylneuraminate degradation; D-fructose 6-phosphate from N-acetylneuraminate: step 5/5. Its function is as follows. Catalyzes the reversible isomerization-deamination of glucosamine 6-phosphate (GlcN6P) to form fructose 6-phosphate (Fru6P) and ammonium ion. The sequence is that of Glucosamine-6-phosphate deaminase from Mycolicibacterium smegmatis (strain ATCC 700084 / mc(2)155) (Mycobacterium smegmatis).